The sequence spans 881 residues: MAAVDSTDRRDFIVNINGQESGAVGATGSSSNAEGGNIWKESSYDFWDGEKGKNDKKGDDEDEDGGSFHFRQRGERRHSSAELSDPPSKLIGQFLHKQRASGDEISLDVELNMAELQSNTPPRPATASNTPRRGLTTISESSSPVKTKVKADAVRRRQNRTSLGGSSDEEGRNRDEAEVLKCGSKKPMLSRNKTKSRLQDPPTPTHPAIDKTEMKSGRRSGIFKSGFLGKSPKAGTPGRNGFEEEEEEDPFLDEDLPEEFKRDKLSFWVFLEWISLVLIVTSLVCSLTIHNLQRKTWWKLDLWKWEVTVLVLICGRLVSSWIVRIIVFLVEKNFTWRKRVLYFVYGVRKSVQNCLWLGLVLLAWHFLFDKKVERETRSTALRYVTRVLVCLLVALIIWLVKTILVKVLASSFHMSTYFDRIQESLFTQYVIETLSGPPLMEIQRMEEEEQQVAEDVKSLEKLAGAKLPPALKATVKSFMKVGKSPGLNRIGSKRGEDGEGIRIDQLKRMNTKNVSAWNMKRLMNIILKGAISTLDQNMQDTTQEDEDATHIRSEYEAKCAARKIFHNVTEPGSRYIYLEDFLRFLCEEEAERAMALFEGASESDKISKSCLKNWVVKAFRERRALALTLNDTKTAVDRLHRIINVVIGIIIIIIWLLILGIATTRFLLVLSSQLLLVAFVFGNSCKTIFEAIIFLFVMHPFDVGDRCEIDGVQLVVEEMNILTTVFLRYDNQKIIYPNSVLGTKPIANYYRSPDMGDAVEFCVHIATPPEKITAIKQRILSYVDNKKDYWYPAPMIVFLSMDDLNSVKIAVWLTHRMNHQDMGERYIRRGLLLEEVGKTCRELDIEYRLYPLNINVRSLPPTANPTSSDRIPPSWMQQRGP.

Basic and acidic residues-rich tracts occupy residues 1 to 12 (MAAVDSTDRRDF) and 48 to 59 (DGEKGKNDKKGD). Positions 1 to 248 (MAAVDSTDRR…RNGFEEEEEE (248 aa)) are disordered. Positions 115–145 (ELQSNTPPRPATASNTPRRGLTTISESSSPV) are enriched in polar residues. Positions 169-179 (EEGRNRDEAEV) are enriched in basic and acidic residues. S231 bears the Phosphoserine mark. 6 helical membrane-spanning segments follow: residues 265-285 (LSFW…SLVC), 309-329 (VLVL…IVFL), 349-369 (KSVQ…FLFD), 387-407 (VLVC…LVKV), 642-662 (IINV…LGIA), and 677-697 (VAFV…FLFV). Residues 861–881 (PTANPTSSDRIPPSWMQQRGP) form a disordered region. The span at 864–881 (NPTSSDRIPPSWMQQRGP) shows a compositional bias: polar residues.

It belongs to the MscS (TC 1.A.23) family.

It is found in the membrane. Functionally, mechanosensitive channel that opens in response to stretch forces in the membrane lipid bilayer. This is Mechanosensitive ion channel protein 5 (MSL5) from Arabidopsis thaliana (Mouse-ear cress).